A 172-amino-acid polypeptide reads, in one-letter code: 18.6 kDa class III heat shock protein (172 aa).

Residues 29–54 are disordered; that stretch reads RRSAGDHAHHAAHGHGQHRISGIGGG. The sHSP domain maps to 48–172; that stretch reads ISGIGGGAPV…KTKSVQVTIA (125 aa).

It belongs to the small heat shock protein (HSP20) family. May form oligomeric structures.

Its subcellular location is the cytoplasm. The sequence is that of 18.6 kDa class III heat shock protein (HSP18.6) from Oryza sativa subsp. japonica (Rice).